We begin with the raw amino-acid sequence, 87 residues long: Omega-lycotoxin-Am1g (87 aa).

Positions 1-17 (MKLSIFFVLFFIAIAYC) are cleaved as a signal peptide. Residues 18–40 (QPEFLDDEEDEVEETLPVAEEGR) constitute a propeptide that is removed on maturation. 4 cysteine pairs are disulfide-bonded: cysteine 44/cysteine 59, cysteine 51/cysteine 64, cysteine 58/cysteine 84, and cysteine 66/cysteine 82.

This sequence belongs to the neurotoxin omega-lctx family. In terms of tissue distribution, expressed by the venom gland.

It localises to the secreted. Its function is as follows. Modulates Cav2.1/CACNA1A voltage-gated calcium channels (P/Q-type currents) in rat cerebellar Purkinje cells and hippocampal CA1-CA3 neurons. At saturating concentrations (&gt;10 nM) decelerates activation kinetics and slightly increases peak amplitude without affecting deactivation kinetics. In vivo, does not cause death when intravenously injected into mice. In rat models, through its activity on Cav2.1/CACNA1A, has an ameliorative effect on memory defects provoked by hyperstimulation of N-methyl-D-aspartate receptors (NMDARs) in the hippocampus. This Alopecosa marikovskyi (Wolf spider) protein is Omega-lycotoxin-Am1g.